The chain runs to 303 residues: Glycine--tRNA ligase alpha subunit (303 aa).

The protein belongs to the class-II aminoacyl-tRNA synthetase family. Tetramer of two alpha and two beta subunits.

The protein resides in the cytoplasm. The catalysed reaction is tRNA(Gly) + glycine + ATP = glycyl-tRNA(Gly) + AMP + diphosphate. This is Glycine--tRNA ligase alpha subunit from Bordetella pertussis (strain Tohama I / ATCC BAA-589 / NCTC 13251).